The chain runs to 913 residues: Eukaryotic translation initiation factor 3 subunit C (913 aa).

The interval Met1–Asp44 is disordered. Low complexity predominate over residues Gly8–Glu21. Residues Ser9, Ser11, Ser13, Ser15, Ser16, Ser18, and Ser39 each carry the phosphoserine modification. Lys99 carries the post-translational modification N6-acetyllysine. 2 disordered regions span residues Thr157 to Trp301 and Gln522 to Glu542. 4 positions are modified to phosphoserine: Ser166, Ser178, Ser181, and Ser182. The segment covering Ser166 to Gly190 has biased composition (acidic residues). Residues Lys199–Asp216 are compositionally biased toward basic and acidic residues. Residues Asp217–Asp232 are compositionally biased toward acidic residues. A compositionally biased stretch (basic and acidic residues) spans Pro261–Ala278. Residues Gln522–Lys531 are compositionally biased toward polar residues. Position 524 is a phosphothreonine (Thr524). Lys643 is subject to N6-acetyllysine. In terms of domain architecture, PCI spans Phe673–Pro849. The interval Phe885 to Tyr913 is disordered. The span at Arg886 to Met899 shows a compositional bias: basic and acidic residues. Ser909 is modified (phosphoserine).

Component of the eukaryotic translation initiation factor 3 (eIF-3) complex, which is composed of 13 subunits: EIF3A, EIF3B, EIF3C, EIF3D, EIF3E, EIF3F, EIF3G, EIF3H, EIF3I, EIF3J, EIF3K, EIF3L and EIF3M. The eIF-3 complex appears to include 3 stable modules: module A is composed of EIF3A, EIF3B, EIF3G and EIF3I; module B is composed of EIF3F, EIF3H, and EIF3M; and module C is composed of EIF3C, EIF3D, EIF3E, EIF3K and EIF3L. EIF3C of module C binds EIF3B of module A and EIF3H of module B, thereby linking the three modules. EIF3J is a labile subunit that binds to the eIF-3 complex via EIF3B. The eIF-3 complex interacts with RPS6KB1 under conditions of nutrient depletion. Mitogenic stimulation leads to binding and activation of a complex composed of MTOR and RPTOR, leading to phosphorylation and release of RPS6KB1 and binding of EIF4B to eIF-3. Identified in a HCV IRES-mediated translation complex, at least composed of EIF3C, IGF2BP1, RPS3 and HCV RNA-replicon. Interacts with ALKBH4, IFIT1 and IFIT2. Interacts with BZW2/5MP1. Post-translationally, phosphorylated. Phosphorylation is enhanced upon serum stimulation.

The protein resides in the cytoplasm. Its function is as follows. Component of the eukaryotic translation initiation factor 3 (eIF-3) complex, which is required for several steps in the initiation of protein synthesis. The eIF-3 complex associates with the 40S ribosome and facilitates the recruitment of eIF-1, eIF-1A, eIF-2:GTP:methionyl-tRNAi and eIF-5 to form the 43S pre-initiation complex (43S PIC). The eIF-3 complex stimulates mRNA recruitment to the 43S PIC and scanning of the mRNA for AUG recognition. The eIF-3 complex is also required for disassembly and recycling of post-termination ribosomal complexes and subsequently prevents premature joining of the 40S and 60S ribosomal subunits prior to initiation. The eIF-3 complex specifically targets and initiates translation of a subset of mRNAs involved in cell proliferation, including cell cycling, differentiation and apoptosis, and uses different modes of RNA stem-loop binding to exert either translational activation or repression. In Homo sapiens (Human), this protein is Eukaryotic translation initiation factor 3 subunit C.